A 717-amino-acid chain; its full sequence is Fatty acid oxidation complex subunit alpha (717 aa).

The enoyl-CoA hydratase/isomerase stretch occupies residues 1–189 (MIYQSPTIEV…KVGAIDAVVA (189 aa)). Aspartate 296 contacts substrate. The segment at 311–717 (KKVNSAAVLG…ANNGSYYQQA (407 aa)) is 3-hydroxyacyl-CoA dehydrogenase. NAD(+) contacts are provided by residues methionine 324, aspartate 343, 400–402 (VVE), lysine 407, and serine 429. The For 3-hydroxyacyl-CoA dehydrogenase activity role is filled by histidine 450. Asparagine 453 contacts NAD(+). Residues asparagine 500 and tyrosine 660 each contribute to the substrate site.

It in the N-terminal section; belongs to the enoyl-CoA hydratase/isomerase family. The protein in the C-terminal section; belongs to the 3-hydroxyacyl-CoA dehydrogenase family. As to quaternary structure, heterotetramer of two alpha chains (FadB) and two beta chains (FadA).

The catalysed reaction is a (3S)-3-hydroxyacyl-CoA + NAD(+) = a 3-oxoacyl-CoA + NADH + H(+). It catalyses the reaction a (3S)-3-hydroxyacyl-CoA = a (2E)-enoyl-CoA + H2O. The enzyme catalyses a 4-saturated-(3S)-3-hydroxyacyl-CoA = a (3E)-enoyl-CoA + H2O. It carries out the reaction (3S)-3-hydroxybutanoyl-CoA = (3R)-3-hydroxybutanoyl-CoA. The catalysed reaction is a (3Z)-enoyl-CoA = a 4-saturated (2E)-enoyl-CoA. It catalyses the reaction a (3E)-enoyl-CoA = a 4-saturated (2E)-enoyl-CoA. It functions in the pathway lipid metabolism; fatty acid beta-oxidation. In terms of biological role, involved in the aerobic and anaerobic degradation of long-chain fatty acids via beta-oxidation cycle. Catalyzes the formation of 3-oxoacyl-CoA from enoyl-CoA via L-3-hydroxyacyl-CoA. It can also use D-3-hydroxyacyl-CoA and cis-3-enoyl-CoA as substrate. In Shewanella halifaxensis (strain HAW-EB4), this protein is Fatty acid oxidation complex subunit alpha.